We begin with the raw amino-acid sequence, 327 residues long: Interleukin-12 subunit beta (327 aa).

Residues 1–22 form the signal peptide; that stretch reads MHPQQLVVSWFSLVLLASPIVA. Residues 23 to 106 form the Ig-like C2-type domain; it reads MWELEKNVYV…LSRSLLLLHK (84 aa). Cys50 and Cys90 are disulfide-bonded. Asn223 carries an N-linked (GlcNAc...) asparagine glycan. One can recognise a Fibronectin type-III domain in the interval 238 to 327; that stretch reads PPKNLQLRPL…WSEWASVSCS (90 aa).

Belongs to the IL-12B family. Heterodimer with IL12A; disulfide-linked. The heterodimer is known as interleukin IL-12. Heterodimer with IL23A; disulfide-linked. The heterodimer is known as interleukin IL-23. Also secreted as a monomer. Interacts with NBR1; this interaction promotes IL-12 secretion.

The protein resides in the secreted. Its function is as follows. Cytokine that can act as a growth factor for activated T and NK cells, enhance the lytic activity of NK/lymphokine-activated killer cells, and stimulate the production of IFN-gamma by resting PBMC. Associates with IL23A to form the IL-23 interleukin, a heterodimeric cytokine which functions in innate and adaptive immunity. IL-23 may constitute with IL-17 an acute response to infection in peripheral tissues. IL-23 binds to a heterodimeric receptor complex composed of IL12RB1 and IL23R, activates the Jak-Stat signaling cascade, stimulates memory rather than naive T-cells and promotes production of pro-inflammatory cytokines. IL-23 induces autoimmune inflammation and thus may be responsible for autoimmune inflammatory diseases and may be important for tumorigenesis. This Bos taurus (Bovine) protein is Interleukin-12 subunit beta (IL12B).